We begin with the raw amino-acid sequence, 294 residues long: UDP-3-O-acyl-N-acetylglucosamine deacetylase (294 aa).

Residues His-75, His-232, and Asp-236 each coordinate Zn(2+). The active-site Proton donor is His-259.

It belongs to the LpxC family. The cofactor is Zn(2+).

The enzyme catalyses a UDP-3-O-[(3R)-3-hydroxyacyl]-N-acetyl-alpha-D-glucosamine + H2O = a UDP-3-O-[(3R)-3-hydroxyacyl]-alpha-D-glucosamine + acetate. Its pathway is glycolipid biosynthesis; lipid IV(A) biosynthesis; lipid IV(A) from (3R)-3-hydroxytetradecanoyl-[acyl-carrier-protein] and UDP-N-acetyl-alpha-D-glucosamine: step 2/6. Functionally, catalyzes the hydrolysis of UDP-3-O-myristoyl-N-acetylglucosamine to form UDP-3-O-myristoylglucosamine and acetate, the committed step in lipid A biosynthesis. In Campylobacter lari (strain RM2100 / D67 / ATCC BAA-1060), this protein is UDP-3-O-acyl-N-acetylglucosamine deacetylase.